A 137-amino-acid chain; its full sequence is Holo-[acyl-carrier-protein] synthase (137 aa).

Residues Asp8 and Glu57 each coordinate Mg(2+).

This sequence belongs to the P-Pant transferase superfamily. AcpS family. It depends on Mg(2+) as a cofactor.

The protein resides in the cytoplasm. It catalyses the reaction apo-[ACP] + CoA = holo-[ACP] + adenosine 3',5'-bisphosphate + H(+). Functionally, transfers the 4'-phosphopantetheine moiety from coenzyme A to a Ser of acyl-carrier-protein. The polypeptide is Holo-[acyl-carrier-protein] synthase (Hyphomonas neptunium (strain ATCC 15444)).